A 361-amino-acid chain; its full sequence is Probable dual-specificity RNA methyltransferase RlmN (361 aa).

The active-site Proton acceptor is Glu91. One can recognise a Radical SAM core domain in the interval 97-329 (QHYGLSVCVT…KKKGGNCVVR (233 aa)). The cysteines at positions 104 and 340 are disulfide-linked. 3 residues coordinate [4Fe-4S] cluster: Cys111, Cys115, and Cys118. Residues 163–164 (GE), Ser195, 218–220 (SLH), and Asn296 each bind S-adenosyl-L-methionine. Cys340 functions as the S-methylcysteine intermediate in the catalytic mechanism.

The protein belongs to the radical SAM superfamily. RlmN family. [4Fe-4S] cluster is required as a cofactor.

The protein resides in the cytoplasm. The catalysed reaction is adenosine(2503) in 23S rRNA + 2 reduced [2Fe-2S]-[ferredoxin] + 2 S-adenosyl-L-methionine = 2-methyladenosine(2503) in 23S rRNA + 5'-deoxyadenosine + L-methionine + 2 oxidized [2Fe-2S]-[ferredoxin] + S-adenosyl-L-homocysteine. The enzyme catalyses adenosine(37) in tRNA + 2 reduced [2Fe-2S]-[ferredoxin] + 2 S-adenosyl-L-methionine = 2-methyladenosine(37) in tRNA + 5'-deoxyadenosine + L-methionine + 2 oxidized [2Fe-2S]-[ferredoxin] + S-adenosyl-L-homocysteine. In terms of biological role, specifically methylates position 2 of adenine 2503 in 23S rRNA and position 2 of adenine 37 in tRNAs. The polypeptide is Probable dual-specificity RNA methyltransferase RlmN (Streptococcus pneumoniae (strain Hungary19A-6)).